The following is a 532-amino-acid chain: MKRKDIVKLSRRDFERAWLESGKSLRKPHHDMQYPRLRFETGKSHVLYDTIWMIREAYLRLGFSEMVNPLLIDEEHIYRQFGPEAPAVLDRCFYLGGLPRPDIGLGTGRIQMIEDMGIDVSDEKLENLKEVFRSYKKGDLSGDDLVLEVSNALEVESHDGLRVLERVFPEIRDLKPVSGRTTLRSHMTSGWFISLQNIHDRYRMPLKLFSIDRCFRREQKEDSSHLMTYHSASCVVVDHEVPLDVGKAVAEGLLEHLGFSRFRFRPDEKKSKYYIPGTQTEVYAYHPLLKEWVEVATFGLYSPIALSMYGIDQEVMNLGVGVERVAMILNQASDVREMVYPQIYGEWRLSDRDIAEMLRINLHPVTSDGRMLMEKIVKTWRAHADAPSPCSFEVYSGEFLGRRIEVSALEVEENTRLLGPAVWNTVYIHDGNILGVPPGTELDSELITRARKEGLNTGITYMEALAAEAAYRIEEMVVSGAEEVEVRSTIARSLSDLNLTLEDTAMRYITGKNREIDLRGPLFSTIRCRLRG.

Substrate is bound by residues 186–188, 231–233, 273–274, and asparagine 317; these read HMT, SAS, and YY.

It belongs to the class-II aminoacyl-tRNA synthetase family. O-phosphoseryl-tRNA(Cys) synthetase subfamily. In terms of assembly, homotetramer. Interacts with SepCysS.

It catalyses the reaction tRNA(Cys) + O-phospho-L-serine + ATP = O-phospho-L-seryl-tRNA(Cys) + AMP + diphosphate. Catalyzes the attachment of O-phosphoserine (Sep) to tRNA(Cys). The sequence is that of O-phosphoserine--tRNA(Cys) ligase from Methanothermobacter thermautotrophicus (strain ATCC 29096 / DSM 1053 / JCM 10044 / NBRC 100330 / Delta H) (Methanobacterium thermoautotrophicum).